The following is a 140-amino-acid chain: Transmembrane protein 107 (140 aa).

A run of 2 helical transmembrane segments spans residues 7–27 and 53–73; these read LVPS…TLFW and LVAA…GFLS. N79 carries an N-linked (GlcNAc...) asparagine glycan. 2 consecutive transmembrane segments (helical) span residues 83–103 and 113–133; these read SLLS…FIFE and IFAF…IAVF.

In terms of assembly, part of the tectonic-like complex (also named B9 complex). Interacts with TMEM237, TMEM231, MKS1 and TMEM216.

It localises to the membrane. The protein localises to the cell projection. Its subcellular location is the cilium. In terms of biological role, plays a role in cilia formation and embryonic patterning. Requires for normal Sonic hedgehog (Shh) signaling in the neural tube and acts in combination with GLI2 and GLI3 to pattern ventral and intermediate neuronal cell types. During ciliogenesis regulates the ciliary transition zone localization of some MKS complex proteins. The polypeptide is Transmembrane protein 107 (Rattus norvegicus (Rat)).